Reading from the N-terminus, the 421-residue chain is Testin (421 aa).

One can recognise a PET domain in the interval 92–199 (MILTNPVAAK…GDVKLPREMN (108 aa)). The disordered stretch occupies residues 133–164 (EKQPVAGSEGAQYRKKQLAKQLPAHDQDPSKC). Over residues 155–164 (PAHDQDPSKC) the composition is skewed to basic and acidic residues. LIM zinc-binding domains are found at residues 234-297 (YSCY…CDSE), 299-359 (PRCA…NHAV), and 362-421 (QGCH…KMMS).

Belongs to the prickle / espinas / testin family. As to quaternary structure, interacts via LIM domain 1 with ZYX. Interacts (via LIM domain 3) with ENAH and VASP. Interacts with ALKBH4, talin, actin, alpha-actinin, GRIP1 and PXN. Interacts (via LIM domain 2) with ACTL7A (via N-terminus). Heterodimer with ACTL7A; the heterodimer interacts with ENAH to form a heterotrimer.

It is found in the cytoplasm. The protein resides in the cell junction. It localises to the focal adhesion. In terms of biological role, scaffold protein that may play a role in cell adhesion, cell spreading and in the reorganization of the actin cytoskeleton. Plays a role in the regulation of cell proliferation. May act as a tumor suppressor. This Sus scrofa (Pig) protein is Testin (TES).